The following is an 852-amino-acid chain: Glutamine--tRNA ligase (852 aa).

Residues 1 to 42 (MGAFGWEQDRGAPFSGRSPRILTRMTDAPRPTAGADAPARPP) form a disordered region. Residues 1-635 (MGAFGWEQDR…ITLKDTWGKQ (635 aa)) form a glutaminyl-tRNA synthetase region. Over residues 28–38 (APRPTAGADAP) the composition is skewed to low complexity. The 'HIGH' region signature appears at 74-84 (PDPSGYAHLGH). L-glutamine contacts are provided by Asp-107 and Tyr-252. Residues 308-312 (ITSKR) carry the 'KMSKS' region motif. 2 disordered regions span residues 533–562 (EGEN…TAPV) and 632–681 (WGKQ…LTPE). Residues 636–852 (GGGTQQKAEG…LAAALKDALA (217 aa)) form a gatB-like region. Low complexity predominate over residues 664–675 (SSSPAKAHAPKA).

It in the N-terminal section; belongs to the class-I aminoacyl-tRNA synthetase family. In the C-terminal section; belongs to the GatB/GatE family. As to quaternary structure, monomer.

The protein resides in the cytoplasm. The catalysed reaction is tRNA(Gln) + L-glutamine + ATP = L-glutaminyl-tRNA(Gln) + AMP + diphosphate. This chain is Glutamine--tRNA ligase, found in Deinococcus radiodurans (strain ATCC 13939 / DSM 20539 / JCM 16871 / CCUG 27074 / LMG 4051 / NBRC 15346 / NCIMB 9279 / VKM B-1422 / R1).